A 139-amino-acid chain; its full sequence is Nucleoside diphosphate kinase (139 aa).

6 residues coordinate ATP: Lys-11, Phe-59, Arg-87, Thr-93, Arg-104, and Asn-114. Residue His-117 is the Pros-phosphohistidine intermediate of the active site.

The protein belongs to the NDK family. Homotetramer. Mg(2+) is required as a cofactor.

It is found in the cytoplasm. It carries out the reaction a 2'-deoxyribonucleoside 5'-diphosphate + ATP = a 2'-deoxyribonucleoside 5'-triphosphate + ADP. The enzyme catalyses a ribonucleoside 5'-diphosphate + ATP = a ribonucleoside 5'-triphosphate + ADP. In terms of biological role, major role in the synthesis of nucleoside triphosphates other than ATP. The ATP gamma phosphate is transferred to the NDP beta phosphate via a ping-pong mechanism, using a phosphorylated active-site intermediate. The chain is Nucleoside diphosphate kinase from Flavobacterium psychrophilum (strain ATCC 49511 / DSM 21280 / CIP 103535 / JIP02/86).